The primary structure comprises 406 residues: Olfactomedin-like protein 3 (406 aa).

The N-terminal stretch at 1–21 is a signal peptide; that stretch reads MGPSAPLLLLFFLSWTGPLQG. The stretch at 25–101 forms a coiled coil; the sequence is HLVEYMERRL…REVDYLETQN (77 aa). The Olfactomedin-like domain occupies 134-401; it reads DCSYTVAQVR…QIVYKLEMKK (268 aa). Cysteines 135 and 328 form a disulfide. Residues N177 and N248 are each glycosylated (N-linked (GlcNAc...) asparagine).

Belongs to the OLFML3 family.

The protein resides in the secreted. Its function is as follows. Secreted scaffold protein that plays an essential role in dorsoventral patterning during early development. Stabilizes axial formation by restricting chordin (CHRD) activity on the dorsal side. Acts by facilitating the association between the tolloid proteases and their substrate chordin (CHRD), leading to enhance chordin (CHRD) degradation. May have matrix-related function involved in placental and embryonic development, or play a similar role in other physiological processes. This chain is Olfactomedin-like protein 3 (Olfml3), found in Mus musculus (Mouse).